The following is a 515-amino-acid chain: NAD(P)H-quinone oxidoreductase subunit 2 (515 aa).

Transmembrane regions (helical) follow at residues 14–34, 42–62, 79–99, 109–128, 132–151, 167–187, 206–226, 240–260, 274–294, 302–322, 330–350, 374–394, 396–416, and 462–482; these read TILP…ADLI, WTPY…IPLW, LSLF…LMSI, LGEF…FIAG, LVFI…LLTG, LLIG…LYGL, LGLV…ISAV, PTPV…ALAI, WQLI…VVAL, MLAY…VVGT, LFYL…VILF, LGLS…GFFG, IYLF…LGLL, and VGLV…NPLF.

It belongs to the complex I subunit 2 family. NDH-1 can be composed of about 15 different subunits; different subcomplexes with different compositions have been identified which probably have different functions.

The protein resides in the cellular thylakoid membrane. It catalyses the reaction a plastoquinone + NADH + (n+1) H(+)(in) = a plastoquinol + NAD(+) + n H(+)(out). It carries out the reaction a plastoquinone + NADPH + (n+1) H(+)(in) = a plastoquinol + NADP(+) + n H(+)(out). NDH-1 shuttles electrons from an unknown electron donor, via FMN and iron-sulfur (Fe-S) centers, to quinones in the respiratory and/or the photosynthetic chain. The immediate electron acceptor for the enzyme in this species is believed to be plastoquinone. Couples the redox reaction to proton translocation, and thus conserves the redox energy in a proton gradient. Cyanobacterial NDH-1 also plays a role in inorganic carbon-concentration. This chain is NAD(P)H-quinone oxidoreductase subunit 2, found in Thermosynechococcus vestitus (strain NIES-2133 / IAM M-273 / BP-1).